Reading from the N-terminus, the 365-residue chain is Caffeic acid 3-O-methyltransferase (365 aa).

130–136 (MNQDKVL) is a substrate binding site. The substrate binding stretch occupies residues 162-180 (AFEYHGTDPRFNKVFNRGM). Residues G208, D231, D251, M252, and K265 each contribute to the S-adenosyl-L-methionine site. Residue H269 is the Proton acceptor of the active site.

Belongs to the class I-like SAM-binding methyltransferase superfamily. Cation-independent O-methyltransferase family. COMT subfamily. As to quaternary structure, homodimer.

The catalysed reaction is (E)-caffeate + S-adenosyl-L-methionine = (E)-ferulate + S-adenosyl-L-homocysteine + H(+). It functions in the pathway aromatic compound metabolism; phenylpropanoid biosynthesis. Functionally, catalyzes the conversion of caffeic acid to ferulic acid and of 5-hydroxyferulic acid to sinapic acid. The resulting products may subsequently be converted to the corresponding alcohols that are incorporated into lignins. The chain is Caffeic acid 3-O-methyltransferase (COMT1) from Prunus dulcis (Almond).